The following is an 848-amino-acid chain: ATP-dependent Clp protease ATP-binding subunit ClpC1 (848 aa).

Positions phenylalanine 2 to glycine 144 constitute a Clp R domain. Repeat regions lie at residues phenylalanine 5–glycine 70 and phenylalanine 80–glycine 144. An i region spans residues leucine 171 to proline 418. An ATP-binding site is contributed by glycine 216 to threonine 223. Residues aspartate 425–glutamine 460 form the UVR domain. Residues valine 479–threonine 670 are II. Glycine 553–threonine 560 contacts ATP. The disordered stretch occupies residues threonine 821 to arginine 848.

The protein belongs to the ClpA/ClpB family. ClpC subfamily.

Functionally, ATP-dependent specificity component of the Clp protease. It directs the protease to specific substrates. Can perform chaperone functions in the absence of ClpP. Degrades anti-sigma-E factor RseA in the presence of ClpP2. The protein is ATP-dependent Clp protease ATP-binding subunit ClpC1 (clpC1) of Mycobacterium tuberculosis (strain ATCC 25618 / H37Rv).